The chain runs to 252 residues: PF03932 family protein CutC (252 aa).

This sequence belongs to the CutC family.

It localises to the cytoplasm. This chain is PF03932 family protein CutC, found in Sodalis glossinidius (strain morsitans).